The chain runs to 200 residues: Glycerol-3-phosphate acyltransferase (200 aa).

6 helical membrane passes run 9–29, 54–74, 81–101, 112–132, 140–160, and 165–185; these read IIIGAYLIGSIPFGFLLAYFW, VPGMIVLILDMIKGISAVLLA, DIAVLGVALAVMAGHSWPLWL, GAGAILALSPMPLLLAFLVWL, YVSLGSILGAVSLPIWMALLN, and YLIFSVLVASFAVWKHSSNIG.

It belongs to the PlsY family. As to quaternary structure, probably interacts with PlsX.

Its subcellular location is the cell membrane. It catalyses the reaction an acyl phosphate + sn-glycerol 3-phosphate = a 1-acyl-sn-glycero-3-phosphate + phosphate. It functions in the pathway lipid metabolism; phospholipid metabolism. In terms of biological role, catalyzes the transfer of an acyl group from acyl-phosphate (acyl-PO(4)) to glycerol-3-phosphate (G3P) to form lysophosphatidic acid (LPA). This enzyme utilizes acyl-phosphate as fatty acyl donor, but not acyl-CoA or acyl-ACP. This Desulforamulus reducens (strain ATCC BAA-1160 / DSM 100696 / MI-1) (Desulfotomaculum reducens) protein is Glycerol-3-phosphate acyltransferase.